A 221-amino-acid polypeptide reads, in one-letter code: Aspartic protease inhibitor 1 (221 aa).

The N-terminal stretch at 1–23 is a signal peptide; that stretch reads MMKCLFFLCLCLFPILVFSSTFT. The propeptide occupies 24-32; the sequence is SQNPINLPS. Positions 26–31 match the Vacuolar targeting signal motif; that stretch reads NPINLP. The N-linked (GlcNAc...) asparagine glycan is linked to Asn-51. Cystine bridges form between Cys-80/Cys-125 and Cys-174/Cys-186.

Belongs to the protease inhibitor I3 (leguminous Kunitz-type inhibitor) family. In terms of tissue distribution, tubers, young leaves and flower bud. Not detected in root, stem or mature leaves.

Its subcellular location is the vacuole. In terms of biological role, inhibitor of cathepsin D (aspartic protease). May also inhibit trypsin and chymotrypsin (serine proteases). Protects the plant by inhibiting proteases of invading organisms. The sequence is that of Aspartic protease inhibitor 1 from Solanum tuberosum (Potato).